The sequence spans 526 residues: ATP synthase subunit alpha (526 aa).

Residue 171–178 (GDRQVGKT) participates in ATP binding.

The protein belongs to the ATPase alpha/beta chains family. In terms of assembly, F-type ATPases have 2 components, CF(1) - the catalytic core - and CF(0) - the membrane proton channel. CF(1) has five subunits: alpha(3), beta(3), gamma(1), delta(1), epsilon(1). CF(0) has three main subunits: a(1), b(2) and c(9-12). The alpha and beta chains form an alternating ring which encloses part of the gamma chain. CF(1) is attached to CF(0) by a central stalk formed by the gamma and epsilon chains, while a peripheral stalk is formed by the delta and b chains.

It localises to the cell inner membrane. It carries out the reaction ATP + H2O + 4 H(+)(in) = ADP + phosphate + 5 H(+)(out). In terms of biological role, produces ATP from ADP in the presence of a proton gradient across the membrane. The alpha chain is a regulatory subunit. This chain is ATP synthase subunit alpha, found in Azobacteroides pseudotrichonymphae genomovar. CFP2.